The chain runs to 264 residues: Thymidylate synthase (264 aa).

R21 serves as a coordination point for dUMP. H51 contacts (6R)-5,10-methylene-5,6,7,8-tetrahydrofolate. 126 to 127 provides a ligand contact to dUMP; that stretch reads RR. Residue C146 is the Nucleophile of the active site. DUMP-binding positions include 166 to 169, N177, and 207 to 209; these read RSAD and HLY. D169 is a (6R)-5,10-methylene-5,6,7,8-tetrahydrofolate binding site. A263 lines the (6R)-5,10-methylene-5,6,7,8-tetrahydrofolate pocket.

Belongs to the thymidylate synthase family. Bacterial-type ThyA subfamily. Homodimer.

It localises to the cytoplasm. It carries out the reaction dUMP + (6R)-5,10-methylene-5,6,7,8-tetrahydrofolate = 7,8-dihydrofolate + dTMP. It functions in the pathway pyrimidine metabolism; dTTP biosynthesis. Functionally, catalyzes the reductive methylation of 2'-deoxyuridine-5'-monophosphate (dUMP) to 2'-deoxythymidine-5'-monophosphate (dTMP) while utilizing 5,10-methylenetetrahydrofolate (mTHF) as the methyl donor and reductant in the reaction, yielding dihydrofolate (DHF) as a by-product. This enzymatic reaction provides an intracellular de novo source of dTMP, an essential precursor for DNA biosynthesis. The sequence is that of Thymidylate synthase from Paramagnetospirillum magneticum (strain ATCC 700264 / AMB-1) (Magnetospirillum magneticum).